Here is a 205-residue protein sequence, read N- to C-terminus: Large ribosomal subunit protein uL4 (205 aa).

A disordered region spans residues 44 to 79 (RAGTKAQKTRREVSGGGAKPWRQKGTGRARAGSSRS).

It belongs to the universal ribosomal protein uL4 family. Part of the 50S ribosomal subunit.

Its function is as follows. One of the primary rRNA binding proteins, this protein initially binds near the 5'-end of the 23S rRNA. It is important during the early stages of 50S assembly. It makes multiple contacts with different domains of the 23S rRNA in the assembled 50S subunit and ribosome. Forms part of the polypeptide exit tunnel. The polypeptide is Large ribosomal subunit protein uL4 (Coxiella burnetii (strain RSA 331 / Henzerling II)).